We begin with the raw amino-acid sequence, 742 residues long: Envelope glycoprotein H (742 aa).

A signal peptide spans 1-23 (MRPGLPSYLIILAVCLFSHLLSS). Topologically, residues 24–719 (RYGAEAVSEP…VVDATDSRLL (696 aa)) are virion surface. Asn-55, Asn-62, Asn-67, and Asn-192 each carry an N-linked (GlcNAc...) asparagine; by host glycan. Cys-195 and Cys-211 are oxidised to a cystine. Residues 217-280 (YLIDELRYVK…QTEKHELLVL (64 aa)) are interaction with gL. Cystine bridges form between Cys-330-Cys-383, Cys-495-Cys-522, and Cys-571-Cys-624. Asn-641 and Asn-700 each carry an N-linked (GlcNAc...) asparagine; by host glycan. The chain crosses the membrane as a helical span at residues 720–740 (MMSVYALSAIIGIYLLYRMLK). Over 741–742 (TC) the chain is Intravirion.

This sequence belongs to the herpesviridae glycoprotein H family. As to quaternary structure, interacts with glycoprotein L (gL); this interaction is necessary for the correct processing and cell surface expression of gH. The heterodimer gH/gL seems to interact with gB trimers during fusion. Forms the envelope pentamer complex (PC) composed of gH, gL, UL128, UL130, and UL131A. The pentamer interacts with host NRP2. Forms the envelope trimer complex composed of gH, gL, and gO. The trimer interacts with host PDGFRA. The trimer also interacts with host EPHA2. The trimer also interacts with host TGFBR3. Interacts with UL116. In terms of processing, N-glycosylated, O-glycosylated, and sialylated.

The protein localises to the virion membrane. The protein resides in the host cell membrane. Its subcellular location is the host endosome membrane. The heterodimer glycoprotein H-glycoprotein L is required for the fusion of viral and plasma membranes leading to virus entry into the host cell. Following initial binding to host receptor, membrane fusion is mediated by the fusion machinery composed of gB and the heterodimer gH/gL. May also be involved in the fusion between the virion envelope and the outer nuclear membrane during virion morphogenesis. In human cytomegalovirus, forms two distincts complexes to mediate viral entry, a trimer and a pentamer at the surface of the virion envelope. The gH-gL-gO trimer is required for infection in fibroblasts by interacting with host PDGFRA, and in glioblastoma cells by interacting with host EPHA2. Thsi trimer may also be required in other cell types using host TGFBR3. The gH-gL-UL128-UL130-UL131A pentamer is essential for viral entry in epithelial, endothelial and myeloid cells via interaction with host NRP2. This Human cytomegalovirus (strain Merlin) (HHV-5) protein is Envelope glycoprotein H.